A 419-amino-acid polypeptide reads, in one-letter code: MACARPLISVYSEKGESSGKNVTLPAVFKAPIRPDIVNFVHTNLRKNNRQPYAVSELAGHQTSAESWGTGRAVARIPRVRGGGTHRSGQGAFGNMCRGGRMFAPTKTWRRWHRRVNTTQKRYAICSALAASALPALVMSKGHRIEEVPELPLVVEDKVEGYKKTKEAVQLLKKLKAWNDIKKVYASQRMRAGKGKMRNRRRIQRRGPCIIYNEDNGIIKAFRNIPGITLLNVSKLNILKLAPGGHVGRFCIWTESAFRKLDELYGTWRKAASLKSNYNLPMHKMMNTDLSRILKSPEIQRALRAPRKKIHRRVLKKNPLKNLRIMLKLNPYAKTMRRNTILRQARNHKLRVKKLEAAATALATKSEKVVPEKGTADKKPAVGKKGKKVDAKKQKPAGKKVVAKKPAEKKPTTEEKKPAA.

The residue at position 2 (A2) is an N-acetylalanine. The residue at position 14 (K14) is an N6-acetyllysine. R97 is subject to Omega-N-methylarginine. The residue at position 106 (K106) is an N6-acetyllysine. K239 is covalently cross-linked (Glycyl lysine isopeptide (Lys-Gly) (interchain with G-Cter in SUMO2)). K259 bears the N6-acetyllysine mark. Residue T266 is modified to Phosphothreonine. Phosphoserine occurs at positions 290 and 295. Citrulline is present on R300. A Glycyl lysine isopeptide (Lys-Gly) (interchain with G-Cter in SUMO2) cross-link involves residue K327. 2 positions are modified to N6-acetyllysine: K333 and K353. At K364 the chain carries N6-acetyllysine; alternate. K364 participates in a covalent cross-link: Glycyl lysine isopeptide (Lys-Gly) (interchain with G-Cter in SUMO1); alternate. A compositionally biased stretch (basic and acidic residues) spans 364–379 (KSEKVVPEKGTADKKP). Residues 364 to 419 (KSEKVVPEKGTADKKPAVGKKGKKVDAKKQKPAGKKVVAKKPAEKKPTTEEKKPAA) form a disordered region. Residue S365 is modified to Phosphoserine. The span at 393 to 402 (QKPAGKKVVA) shows a compositional bias: basic residues. Over residues 404–419 (KPAEKKPTTEEKKPAA) the composition is skewed to basic and acidic residues.

Belongs to the universal ribosomal protein uL4 family. As to quaternary structure, component of the large ribosomal subunit. May bind IPO9 with low affinity. Interacts with RBM3. Post-translationally, citrullinated by PADI4.

The protein localises to the cytoplasm. Component of the large ribosomal subunit. The ribosome is a large ribonucleoprotein complex responsible for the synthesis of proteins in the cell. This is Large ribosomal subunit protein uL4 (Rpl4) from Mus musculus (Mouse).